The chain runs to 325 residues: NADH-quinone oxidoreductase subunit H (325 aa).

The next 8 membrane-spanning stretches (helical) occupy residues 11–31, 81–101, 114–134, 154–174, 186–206, 237–257, 265–285, and 304–324; these read ILLT…CGAF, VIFT…FAIV, IGIL…LFAG, LSYE…AGSF, VWNV…GVAV, FFVG…TLFF, LPPF…FILI, and ICLP…LWQA.

This sequence belongs to the complex I subunit 1 family. As to quaternary structure, NDH-1 is composed of 13 different subunits. Subunits NuoA, H, J, K, L, M, N constitute the membrane sector of the complex.

Its subcellular location is the cell inner membrane. The enzyme catalyses a quinone + NADH + 5 H(+)(in) = a quinol + NAD(+) + 4 H(+)(out). Its function is as follows. NDH-1 shuttles electrons from NADH, via FMN and iron-sulfur (Fe-S) centers, to quinones in the respiratory chain. The immediate electron acceptor for the enzyme in this species is believed to be ubiquinone. Couples the redox reaction to proton translocation (for every two electrons transferred, four hydrogen ions are translocated across the cytoplasmic membrane), and thus conserves the redox energy in a proton gradient. This subunit may bind ubiquinone. The chain is NADH-quinone oxidoreductase subunit H from Escherichia coli O139:H28 (strain E24377A / ETEC).